The primary structure comprises 213 residues: AN1-type zinc finger protein 5 (213 aa).

The segment at 8–42 (TPGPMLCSTGCGFYGNPRTNGMCSVCYKEHLQRQQ) adopts an A20-type zinc-finger fold. Cys-14, Cys-18, Cys-30, and Cys-33 together coordinate Zn(2+). Residues 39-149 (QRQQNSGRMS…EEKAPELPKP (111 aa)) form a disordered region. The span at 40–75 (RQQNSGRMSPMGTASGSNSPTSDSASVQRADTSLNN) shows a compositional bias: polar residues. Phosphoserine occurs at positions 48 and 58. A compositionally biased stretch (low complexity) spans 120–138 (SEPVVTQPSPSVSQPSTSQ). The span at 139–148 (SEEKAPELPK) shows a compositional bias: basic and acidic residues. The segment at 148–194 (KPKKNRCFMCRKKVGLTGFDCRCGNLFCGLHRYSDKHNCPYDYKAEA) adopts an AN1-type zinc-finger fold. Cys-154, Cys-157, Cys-168, Cys-170, Cys-175, His-178, His-184, and Cys-186 together coordinate Zn(2+). An N6-acetyllysine modification is found at Lys-209.

In terms of assembly, interacts with ubiquitin and polyubiquitinated proteins. Identified in a heterotrimeric complex with ubiquitin and SQSTM1, where ZFAND5 and SQSTM1 both interact with the same ubiquitin molecule. Homooligomer and/or heterooligomer. Interacts (via A20-type domain) with IKBKG and RIPK1 and with TRAF6 (via AN1-type domain). As to expression, highly expressed in skeletal muscle. Expressed in fetal cochlea. Also expressed in infant brain, fetal heart, pancreatic islet, melanocyte, pineal gland, placenta, corneal stroma, and parathyroid tumor. Weakly expressed or undetectable in adult brain, heart, colon, thymus, spleen, kidney, liver, small intestine, placenta, lung and peripheral blood leukocytes. Expressed in rhabdomyosarcoma RD cells (at protein level).

Its subcellular location is the cytoplasm. Involved in protein degradation via the ubiquitin-proteasome system. May act by anchoring ubiquitinated proteins to the proteasome. Plays a role in ubiquitin-mediated protein degradation during muscle atrophy. Plays a role in the regulation of NF-kappa-B activation and apoptosis. Inhibits NF-kappa-B activation triggered by overexpression of RIPK1 and TRAF6 but not of RELA. Also inhibits tumor necrosis factor (TNF), IL-1 and TLR4-induced NF-kappa-B activation in a dose-dependent manner. Overexpression sensitizes cells to TNF-induced apoptosis. Is a potent inhibitory factor for osteoclast differentiation. The chain is AN1-type zinc finger protein 5 (ZFAND5) from Homo sapiens (Human).